The chain runs to 102 residues: Large ribosomal subunit protein uL24 (102 aa).

Belongs to the universal ribosomal protein uL24 family. Part of the 50S ribosomal subunit.

In terms of biological role, one of two assembly initiator proteins, it binds directly to the 5'-end of the 23S rRNA, where it nucleates assembly of the 50S subunit. Its function is as follows. One of the proteins that surrounds the polypeptide exit tunnel on the outside of the subunit. The protein is Large ribosomal subunit protein uL24 of Rhizobium johnstonii (strain DSM 114642 / LMG 32736 / 3841) (Rhizobium leguminosarum bv. viciae).